Consider the following 234-residue polypeptide: tRNA1(Val) (adenine(37)-N6)-methyltransferase (234 aa).

The protein belongs to the methyltransferase superfamily. tRNA (adenine-N(6)-)-methyltransferase family.

It is found in the cytoplasm. The enzyme catalyses adenosine(37) in tRNA1(Val) + S-adenosyl-L-methionine = N(6)-methyladenosine(37) in tRNA1(Val) + S-adenosyl-L-homocysteine + H(+). Functionally, specifically methylates the adenine in position 37 of tRNA(1)(Val) (anticodon cmo5UAC). In Aliivibrio fischeri (strain ATCC 700601 / ES114) (Vibrio fischeri), this protein is tRNA1(Val) (adenine(37)-N6)-methyltransferase.